Reading from the N-terminus, the 417-residue chain is Phosphatidylcholine:ceramide cholinephosphotransferase 1 (417 aa).

Residues 11 to 74 enclose the SAM domain; it reads WSPEEVTNWL…LHMIETLKMA (64 aa). 5 helical membrane-spanning segments follow: residues 140 to 160, 188 to 208, 219 to 239, 280 to 300, and 308 to 328; these read FLAF…ISVV, FSIC…QWLL, FFCI…VTTL, MCGD…YLFI, and LWWY…CILL. The active site involves His289. The Cytoplasmic portion of the chain corresponds to 329–417; sequence AHDHYTVDVV…VKYSRLVNDT (89 aa). Catalysis depends on residues His332 and Asp336.

This sequence belongs to the sphingomyelin synthase family.

The protein localises to the golgi apparatus membrane. It carries out the reaction an N-acylsphing-4-enine + a 1,2-diacyl-sn-glycero-3-phosphocholine = a sphingomyelin + a 1,2-diacyl-sn-glycerol. It catalyses the reaction an N-acylsphing-4-enine + a 1,2-diacyl-sn-glycero-3-phosphoethanolamine = an N-acylsphing-4-enine 1-phosphoethanolamine + a 1,2-diacyl-sn-glycerol. In terms of biological role, major sphingomyelin synthase at the Golgi apparatus. Catalyzes the reversible transfer of phosphocholine moiety in sphingomyelin biosynthesis: in the forward reaction transfers phosphocholine head group of phosphatidylcholine (PC) on to ceramide (CER) to form ceramide phosphocholine (sphingomyelin, SM) and diacylglycerol (DAG) as by-product, and in the reverse reaction transfers phosphocholine from SM to DAG to form PC and CER. The direction of the reaction depends on the levels of CER and DAG in Golgi membranes. Converts the newly synthesized CER, that is transported from the endoplasmic reticulum to the trans-Golgi by the Cer transport protein (CERT), to SM. Can form a heteromeric complex with glucosylceramide synthase (GCS) increasing SMS activity and reducing glucosylceramide synthesis, a critical mechanism that controls the metabolic fate of CER in the Golgi. Does not use free phosphorylcholine or CDP-choline as donor. Can also transfer phosphoethanolamine head group of phosphatidylethanolamine (PE) on to CER to form ceramide phosphoethanolamine (CPE). Regulates receptor-mediated signal transduction via mitogenic DAG and proapoptotic CER, as well as via SM, a structural component of membrane rafts that serve as platforms for signal transduction and protein sorting. Plays a role in secretory transport via regulation of DAG pool at the Golgi apparatus and its downstream effects on PRKD1. The sequence is that of Phosphatidylcholine:ceramide cholinephosphotransferase 1 (SGMS1) from Gallus gallus (Chicken).